The sequence spans 229 residues: Clathrin light chain B (229 aa).

Composition is skewed to low complexity over residues 1 to 17 and 45 to 58; these read MAED…GAPE and GAPA…AQPG. The disordered stretch occupies residues 1-80; that stretch reads MAEDFGFFSS…TVNGDVFQEA (80 aa). Residues S11 and S13 each carry the phosphoserine modification. Positions 93 to 155 are involved in binding clathrin heavy chain; it reads ADRLTQEPES…QVEKNKINNR (63 aa). At T187 the chain carries Phosphothreonine. A disulfide bond links C199 and C209. The residue at position 204 (K204) is an N6-acetyllysine. Position 217 is a phosphoserine (S217).

It belongs to the clathrin light chain family. As to quaternary structure, clathrin coats are formed from molecules containing 3 heavy chains and 3 light chains. Interacts (via N-terminus) with HIP1. Interacts with HIP1R.

It localises to the cytoplasmic vesicle membrane. It is found in the membrane. The protein resides in the coated pit. Its function is as follows. Clathrin is the major protein of the polyhedral coat of coated pits and vesicles. This chain is Clathrin light chain B (Cltb), found in Rattus norvegicus (Rat).